The sequence spans 159 residues: Pupal cuticle protein Edg-91 (159 aa).

The signal sequence occupies residues 1–21 (MALVRVSCMLALLLIAGQGQA).

As to expression, larval (posterior) and imaginal (anterior) epidermis.

Component of the pupal cuticle. The chain is Pupal cuticle protein Edg-91 (Edg91) from Drosophila melanogaster (Fruit fly).